A 147-amino-acid polypeptide reads, in one-letter code: Lysozyme C (147 aa).

An N-terminal signal peptide occupies residues 1 to 18 (MRSLLVLVLCFLPLAALG). One can recognise a C-type lysozyme domain in the interval 19-147 (KVYGRCELAA…VNAWIRGCRL (129 aa)). Disulfide bonds link cysteine 24-cysteine 145, cysteine 48-cysteine 133, cysteine 82-cysteine 98, and cysteine 94-cysteine 112. Residues glutamate 53 and aspartate 70 contribute to the active site.

This sequence belongs to the glycosyl hydrolase 22 family. As to quaternary structure, monomer.

Its subcellular location is the secreted. The enzyme catalyses Hydrolysis of (1-&gt;4)-beta-linkages between N-acetylmuramic acid and N-acetyl-D-glucosamine residues in a peptidoglycan and between N-acetyl-D-glucosamine residues in chitodextrins.. Its function is as follows. Lysozymes have primarily a bacteriolytic function; those in tissues and body fluids are associated with the monocyte-macrophage system and enhance the activity of immunoagents. The protein is Lysozyme C (LYZ) of Coturnix japonica (Japanese quail).